Consider the following 657-residue polypeptide: Methionine--tRNA ligase (657 aa).

The 'HIGH' region signature appears at 13–23; that stretch reads YYPSGNLHIGH. The 'KMSKS' region motif lies at 308–312; sequence KMSKS. Residue Lys311 participates in ATP binding. The tRNA-binding domain occupies 557 to 657; it reads DFDKVEIKAA…SAIPNGAVIK (101 aa).

This sequence belongs to the class-I aminoacyl-tRNA synthetase family. MetG type 2B subfamily. Homodimer.

It is found in the cytoplasm. It catalyses the reaction tRNA(Met) + L-methionine + ATP = L-methionyl-tRNA(Met) + AMP + diphosphate. In terms of biological role, is required not only for elongation of protein synthesis but also for the initiation of all mRNA translation through initiator tRNA(fMet) aminoacylation. The polypeptide is Methionine--tRNA ligase (Staphylococcus aureus (strain MRSA252)).